The sequence spans 261 residues: Early 39 kDa protein (261 aa).

The segment at 215–261 (SYVPTPVSNKKRRAPPSAPKKIAKQRRDTKPPPTYVSDNTQDTNMSE) is disordered. Residues 250–261 (VSDNTQDTNMSE) show a composition bias toward polar residues.

This is Early 39 kDa protein from Orgyia pseudotsugata multicapsid polyhedrosis virus (OpMNPV).